A 390-amino-acid chain; its full sequence is S-adenosylmethionine synthase (390 aa).

Glutamate 12 is a binding site for Mg(2+). Histidine 18 provides a ligand contact to ATP. K(+) is bound at residue glutamate 46. L-methionine is bound by residues glutamate 59 and glutamine 102. ATP-binding positions include 170–172 (DGK), 238–241 (SGRF), aspartate 249, 255–256 (RK), alanine 272, lysine 276, and lysine 280. Aspartate 249 is an L-methionine binding site. Lysine 280 lines the L-methionine pocket.

The protein belongs to the AdoMet synthase family. As to quaternary structure, homotetramer. Requires Mn(2+) as cofactor. Mg(2+) is required as a cofactor. Co(2+) serves as cofactor. The cofactor is K(+).

The protein localises to the cytoplasm. It catalyses the reaction L-methionine + ATP + H2O = S-adenosyl-L-methionine + phosphate + diphosphate. The protein operates within amino-acid biosynthesis; S-adenosyl-L-methionine biosynthesis; S-adenosyl-L-methionine from L-methionine: step 1/1. In terms of biological role, catalyzes the formation of S-adenosylmethionine from methionine and ATP. The reaction comprises two steps that are both catalyzed by the same enzyme: formation of S-adenosylmethionine (AdoMet) and triphosphate, and subsequent hydrolysis of the triphosphate. The chain is S-adenosylmethionine synthase (METM) from Chlamydomonas reinhardtii (Chlamydomonas smithii).